The following is a 285-amino-acid chain: Biotin synthase (285 aa).

A Radical SAM core domain is found at 2–223 (STRKQIFLCA…RRAHTLLGED (222 aa)). [4Fe-4S] cluster contacts are provided by cysteine 20, cysteine 24, and cysteine 27. The [2Fe-2S] cluster site is built by cysteine 64, cysteine 99, and cysteine 157.

Belongs to the radical SAM superfamily. Biotin synthase family. Homodimer. [4Fe-4S] cluster is required as a cofactor. It depends on [2Fe-2S] cluster as a cofactor.

The catalysed reaction is (4R,5S)-dethiobiotin + (sulfur carrier)-SH + 2 reduced [2Fe-2S]-[ferredoxin] + 2 S-adenosyl-L-methionine = (sulfur carrier)-H + biotin + 2 5'-deoxyadenosine + 2 L-methionine + 2 oxidized [2Fe-2S]-[ferredoxin]. Its pathway is cofactor biosynthesis; biotin biosynthesis; biotin from 7,8-diaminononanoate: step 2/2. Its function is as follows. Catalyzes the conversion of dethiobiotin (DTB) to biotin by the insertion of a sulfur atom into dethiobiotin via a radical-based mechanism. This is Biotin synthase from Sulfurovum sp. (strain NBC37-1).